A 209-amino-acid polypeptide reads, in one-letter code: ATP phosphoribosyltransferase (209 aa).

The protein belongs to the ATP phosphoribosyltransferase family. Short subfamily. As to quaternary structure, heteromultimer composed of HisG and HisZ subunits.

The protein resides in the cytoplasm. The catalysed reaction is 1-(5-phospho-beta-D-ribosyl)-ATP + diphosphate = 5-phospho-alpha-D-ribose 1-diphosphate + ATP. Its pathway is amino-acid biosynthesis; L-histidine biosynthesis; L-histidine from 5-phospho-alpha-D-ribose 1-diphosphate: step 1/9. In terms of biological role, catalyzes the condensation of ATP and 5-phosphoribose 1-diphosphate to form N'-(5'-phosphoribosyl)-ATP (PR-ATP). Has a crucial role in the pathway because the rate of histidine biosynthesis seems to be controlled primarily by regulation of HisG enzymatic activity. The chain is ATP phosphoribosyltransferase from Alkaliphilus metalliredigens (strain QYMF).